We begin with the raw amino-acid sequence, 359 residues long: Protein-glutamate methylesterase/protein-glutamine glutaminase 2 (359 aa).

Residues Lys6–Asp123 enclose the Response regulatory domain. 4-aspartylphosphate is present on Asp57. Residues Glu167–Cys359 enclose the CheB-type methylesterase domain. Catalysis depends on residues Ser179, His205, and Asp301.

This sequence belongs to the CheB family. In terms of processing, phosphorylated by CheA. Phosphorylation of the N-terminal regulatory domain activates the methylesterase activity.

It is found in the cytoplasm. It carries out the reaction [protein]-L-glutamate 5-O-methyl ester + H2O = L-glutamyl-[protein] + methanol + H(+). The catalysed reaction is L-glutaminyl-[protein] + H2O = L-glutamyl-[protein] + NH4(+). Involved in chemotaxis. Part of a chemotaxis signal transduction system that modulates chemotaxis in response to various stimuli. Catalyzes the demethylation of specific methylglutamate residues introduced into the chemoreceptors (methyl-accepting chemotaxis proteins or MCP) by CheR. Also mediates the irreversible deamidation of specific glutamine residues to glutamic acid. The polypeptide is Protein-glutamate methylesterase/protein-glutamine glutaminase 2 (Dechloromonas aromatica (strain RCB)).